A 119-amino-acid chain; its full sequence is Beta-2-microglobulin (119 aa).

An N-terminal signal peptide occupies residues 1–20; it reads MARFVVVALLVLLSLSGLEA. Positions 25–114 constitute an Ig-like C1-type domain; that stretch reads PKIQVYSRHP…VTLSTPKTVK (90 aa). An intrachain disulfide couples C45 to C100.

The protein belongs to the beta-2-microglobulin family. In terms of assembly, heterodimer of an alpha chain and a beta chain. Beta-2-microglobulin is the beta-chain of major histocompatibility complex class I molecules.

Its subcellular location is the secreted. Its function is as follows. Component of the class I major histocompatibility complex (MHC). Involved in the presentation of peptide antigens to the immune system. In Aotus lemurinus (Gray-bellied night monkey), this protein is Beta-2-microglobulin (B2M).